The following is a 159-amino-acid chain: Nudix hydrolase DR_1025 (159 aa).

Mg(2+) contacts are provided by M1, R14, and S49. 1-6 (MEHDER) lines the ATP pocket. The Nudix hydrolase domain maps to 11–144 (VELRAAGVVL…QIRMYQTKLF (134 aa)). 50–51 (GA) is a binding site for ATP. A Nudix box motif is present at residues 50–71 (GAVEDGENPQDAAVREACEETG). 2 residues coordinate Mg(2+): E53 and E65. 87-89 (FPD) lines the ATP pocket. Position 95 (R95) interacts with Mg(2+).

It belongs to the Nudix hydrolase family. Homodimer. The cofactor is Mg(2+).

It catalyses the reaction 8-oxo-dGTP + H2O = 8-oxo-dGDP + phosphate + H(+). The enzyme catalyses 8-oxo-GTP + H2O = 8-oxo-GDP + phosphate + H(+). The catalysed reaction is P(1),P(4)-bis(5'-adenosyl) tetraphosphate + H2O = AMP + ATP + 2 H(+). Hydrolase that can act as a nucleoside triphosphatase and a dinucleoside polyphosphate pyrophosphatase. The best substrates are 8-oxo-dGTP and 8-oxo-GTP. Other substrates include Ap4A, dGTP and GTP. May be involved in protection from damage caused by radiation. This chain is Nudix hydrolase DR_1025, found in Deinococcus radiodurans (strain ATCC 13939 / DSM 20539 / JCM 16871 / CCUG 27074 / LMG 4051 / NBRC 15346 / NCIMB 9279 / VKM B-1422 / R1).